The chain runs to 161 residues: Nucleotide-binding protein Rpic_2826 (161 aa).

This sequence belongs to the YajQ family.

Nucleotide-binding protein. This is Nucleotide-binding protein Rpic_2826 from Ralstonia pickettii (strain 12J).